Reading from the N-terminus, the 115-residue chain is MSAQGHRLTAPVNSEKVYIVLGLSFALVSITFLLSRNSLPHVGDNIHSLPHGGAYRDGTKAILYNSPNLGSRVSLHNGKNAAFAAVLLLTLLIYGSKYISQRNHTCACGNNHSSH.

The Cytoplasmic segment spans residues 1 to 13; sequence MSAQGHRLTAPVN. A helical membrane pass occupies residues 14–34; the sequence is SEKVYIVLGLSFALVSITFLL. At 35–74 the chain is on the lumenal side; that stretch reads SRNSLPHVGDNIHSLPHGGAYRDGTKAILYNSPNLGSRVS. A helical transmembrane segment spans residues 75-95; sequence LHNGKNAAFAAVLLLTLLIYG. The Cytoplasmic portion of the chain corresponds to 96 to 115; it reads SKYISQRNHTCACGNNHSSH.

The protein belongs to the Tymovirales TGBp2 protein family.

It is found in the host endoplasmic reticulum membrane. Plays a role in viral cell-to-cell propagation, by facilitating genome transport to neighboring plant cells through plasmosdesmata,. This Potato virus X (PVX) protein is Movement protein TGB2.